Here is a 598-residue protein sequence, read N- to C-terminus: Acetylcholine receptor subunit alpha-type acr-5 (598 aa).

The N-terminal stretch at 1–16 (MLPNIILILLIRYCSC) is a signal peptide. Over 17 to 323 (GAGSRVYEKY…HLVIRRKPLY (307 aa)) the chain is Extracellular. Asn-54, Asn-71, Asn-77, Asn-134, Asn-178, and Asn-252 each carry an N-linked (GlcNAc...) asparagine glycan. A helical membrane pass occupies residues 324–344 (YMINLVVPTSIITIVAVTGFF). Topologically, residues 345 to 356 (TPTSSSSERDEK) are cytoplasmic. Residues 357-377 (LYLGINTLLTMSVMMLMVCNQ) traverse the membrane as a helical segment. Residues 378–391 (MPSTSTYVPLMSWY) lie on the Extracellular side of the membrane. Residues 392-412 (YIGIIMVIVVGTFLATGVLAI) traverse the membrane as a helical segment. Over 413–563 (HGQKHYNKPI…WEFLANVLDR (151 aa)) the chain is Cytoplasmic. Residues 564–584 (ILLTIFCGFTFAVFIILIGFD) traverse the membrane as a helical segment. Topologically, residues 585–598 (SFFTFHTDSPPKTM) are extracellular.

It belongs to the ligand-gated ion channel (TC 1.A.9) family. Acetylcholine receptor (TC 1.A.9.1) subfamily.

The protein localises to the postsynaptic cell membrane. The protein resides in the cell membrane. In terms of biological role, subunit of nicotinic acetylcholine receptor (nAChR). Involved in nAChR sensitivity to nicotine. Modulates locomotion towards the drug nicotine. The sequence is that of Acetylcholine receptor subunit alpha-type acr-5 from Caenorhabditis elegans.